The sequence spans 693 residues: FAST kinase domain-containing protein 2, mitochondrial (693 aa).

Phosphoserine is present on residues serine 110 and serine 124. In terms of domain architecture, RAP spans 618 to 675 (VAVLCVSRSAYCLGSSHPRGFLAMKMRHLNAMGFRVILVNNWEMDKLEMEDAVTFLKT). At serine 692 the chain carries Phosphoserine.

This sequence belongs to the FAST kinase family. In terms of assembly, monomer. Found in a complex with GRSF1, DDX28, DHX30 and FASTKD5. Associates with the 16S mitochondrial rRNA (16S mt-rRNA). Forms a regulatory protein-RNA complex, consisting of RCC1L, NGRN, RPUSD3, RPUSD4, TRUB2, FASTKD2 and 16S mt-rRNA.

The protein resides in the mitochondrion matrix. The protein localises to the mitochondrion nucleoid. Its function is as follows. Plays an important role in assembly of the mitochondrial large ribosomal subunit. As a component of a functional protein-RNA module, consisting of RCC1L, NGRN, RPUSD3, RPUSD4, TRUB2, FASTKD2 and 16S mitochondrial ribosomal RNA (16S mt-rRNA), controls 16S mt-rRNA abundance and is required for intra-mitochondrial translation. May play a role in mitochondrial apoptosis. The polypeptide is FAST kinase domain-containing protein 2, mitochondrial (FASTKD2) (Pongo abelii (Sumatran orangutan)).